We begin with the raw amino-acid sequence, 132 residues long: FPRL1 inhibitory protein (132 aa).

The N-terminal stretch at 1 to 28 (MKKNITKVIIASTVIATGLLTQTNDAKA) is a signal peptide.

The protein belongs to the CHIPS/FLIPr family.

Its subcellular location is the secreted. In terms of biological role, may be involved in countering the first line of host defense mechanisms. Impairs the leukocyte response to FPRL1 agonists by binding directly to host FPRL1. This is FPRL1 inhibitory protein (flr) from Staphylococcus aureus (strain MW2).